We begin with the raw amino-acid sequence, 331 residues long: Ribosomal RNA small subunit methyltransferase H (331 aa).

Residues 39 to 41, aspartate 56, phenylalanine 83, aspartate 100, and glutamine 107 contribute to the S-adenosyl-L-methionine site; that span reads GGY.

Belongs to the methyltransferase superfamily. RsmH family.

It localises to the cytoplasm. The enzyme catalyses cytidine(1402) in 16S rRNA + S-adenosyl-L-methionine = N(4)-methylcytidine(1402) in 16S rRNA + S-adenosyl-L-homocysteine + H(+). Its function is as follows. Specifically methylates the N4 position of cytidine in position 1402 (C1402) of 16S rRNA. The chain is Ribosomal RNA small subunit methyltransferase H from Bartonella bacilliformis (strain ATCC 35685 / KC583 / Herrer 020/F12,63).